Reading from the N-terminus, the 83-residue chain is MSSGGLLLLLGLLTLWEVLTPVSSKDRPKFCELPADPGPCNGLFQAFYYNPVQRKCLKFRYGGCKANPNTFKTIEECKRICAA.

A signal peptide spans 1 to 24 (MSSGGLLLLLGLLTLWEVLTPVSS). A BPTI/Kunitz inhibitor domain is found at 31–81 (CELPADPGPCNGLFQAFYYNPVQRKCLKFRYGGCKANPNTFKTIEECKRIC). Intrachain disulfides connect Cys-31-Cys-81, Cys-40-Cys-64, and Cys-56-Cys-77.

The protein belongs to the venom Kunitz-type family. Expressed by the venom gland.

It is found in the secreted. Functionally, serine protease inhibitor. This chain is Kunitz-type serine protease inhibitor blackelin-3, found in Pseudechis porphyriacus (Red-bellied black snake).